The chain runs to 553 residues: Putative ABC transporter ATP-binding protein BCE_3323 (553 aa).

ABC transporter domains are found at residues A7–F245 and L295–R527. ATP-binding positions include G41 to T48 and G329 to S336.

It belongs to the ABC transporter superfamily.

Its subcellular location is the cell membrane. In terms of biological role, probably part of an ABC transporter complex. Responsible for energy coupling to the transport system. This Bacillus cereus (strain ATCC 10987 / NRS 248) protein is Putative ABC transporter ATP-binding protein BCE_3323.